A 487-amino-acid chain; its full sequence is N-succinylglutamate 5-semialdehyde dehydrogenase (487 aa).

221–226 (GSSDTG) contacts NAD(+). Residues Glu244 and Cys278 contribute to the active site.

The protein belongs to the aldehyde dehydrogenase family. AstD subfamily.

It catalyses the reaction N-succinyl-L-glutamate 5-semialdehyde + NAD(+) + H2O = N-succinyl-L-glutamate + NADH + 2 H(+). Its pathway is amino-acid degradation; L-arginine degradation via AST pathway; L-glutamate and succinate from L-arginine: step 4/5. Functionally, catalyzes the NAD-dependent reduction of succinylglutamate semialdehyde into succinylglutamate. This chain is N-succinylglutamate 5-semialdehyde dehydrogenase, found in Burkholderia ambifaria (strain MC40-6).